The primary structure comprises 474 residues: Dol-P-Glc:Glc(2)Man(9)GlcNAc(2)-PP-Dol alpha-1,2-glucosyltransferase (474 aa).

The Cytoplasmic segment spans residues 1 to 6 (MAQLEG). The helical transmembrane segment at 7 to 27 (YYFSAALSCTFLVSCLLFSAF) threads the bilayer. Residues 28 to 64 (SRALREPYMDEIFHLPQAQRYCEGRFSLSQWDPMITT) are Extracellular-facing. The helical transmembrane segment at 65–85 (LPGLYLVSVGVVKPASWILGW) threads the bilayer. Over 86–97 (SEHVVCSIGMLR) the chain is Cytoplasmic. The helical transmembrane segment at 98–118 (FVNLLFSVGNFYLLYLLFRKI) threads the bilayer. Residues 119–126 (QPRNKASS) lie on the Extracellular side of the membrane. A helical transmembrane segment spans residues 127-147 (SIQRILSTLTLAVFPTLYFFN). Over 148-150 (FLY) the chain is Cytoplasmic. A helical transmembrane segment spans residues 151-171 (YTEAGSVFFTLFAYLMCLYGN). The Extracellular segment spans residues 172 to 175 (HRTS). Residues 176-196 (ALLGFCGFMFRQTNIIWAAFC) traverse the membrane as a helical segment. Residues 197–256 (AGHIIAQKCSEAWKTELQKKKEERLPPAKGPLSELRRVLQFLLMYSMSLKNLSMLFLLTW) are Cytoplasmic-facing. A helical transmembrane segment spans residues 257 to 277 (PYMLLLLAFFVFVVVNGGIVV). At 278 to 283 (GDRSSH) the chain is on the extracellular side. Residues 284 to 304 (EACLHFPQLFYFFSFTAFFSF) form a helical membrane-spanning segment. Residues 305-317 (PHLLSPTKVKTFL) are Cytoplasmic-facing. A helical transmembrane segment spans residues 318 to 338 (SLVWKRRVQFSVITLVSVFLV). Topologically, residues 339-365 (WKFTYVHKYLLADNRHYTFYVWKRVFQ) are extracellular. The helical transmembrane segment at 366-386 (RHEIVKYLLVPAYMFAGWAVA) threads the bilayer. Residues 387–392 (DSLKSK) lie on the Cytoplasmic side of the membrane. Residues 393 to 413 (SIFWNLMFFVCLVASTVPQKL) traverse the membrane as a helical segment. Residues 414–436 (LEFRYFILPYIIYRLNMPLPPIS) lie on the Extracellular side of the membrane. Residues 437–457 (RLVCELGCYAVVNFLTFYIFL) form a helical membrane-spanning segment. At 458-473 (NKTFQWSDSHDIQRFM) the chain is on the cytoplasmic side.

It belongs to the ALG10 glucosyltransferase family. In terms of assembly, interacts with KCNH1; may regulate KCNH1, possibly by regulating its N-glycosylation. Interacts with KCNH2; may reduce KCNH2 sensitivity to classic proarrhythmic drug blockade, possibly by regulating its N-glycosylation. In terms of tissue distribution, highly expressed in brain, skeletal muscle, uterus, small intestine and liver. Moderately expressed in lung and kidney. Weakly expressed in heart and stomach.

It is found in the endoplasmic reticulum membrane. It catalyses the reaction an alpha-D-Glc-(1-&gt;3)-alpha-D-Glc-(1-&gt;3)-alpha-D-Man-(1-&gt;2)-alpha-D-Man-(1-&gt;2)-alpha-D-Man-(1-&gt;3)-[alpha-D-Man-(1-&gt;2)-alpha-D-Man-(1-&gt;3)-[alpha-D-Man-(1-&gt;2)-alpha-D-Man-(1-&gt;6)]-alpha-D-Man-(1-&gt;6)]-beta-D-Man-(1-&gt;4)-beta-D-GlcNAc-(1-&gt;4)-alpha-D-GlcNAc-diphospho-di-trans,poly-cis-dolichol + a di-trans,poly-cis-dolichyl beta-D-glucosyl phosphate = a alpha-D-Glc-(1-&gt;2)-alpha-D-Glc-(1-&gt;3)-alpha-D-Glc-(1-&gt;3)-alpha-D-Man-(1-&gt;2)-alpha-D-Man-(1-&gt;2)-alpha-D-Man-(1-&gt;3)-[alpha-D-Man-(1-&gt;2)-alpha-D-Man-(1-&gt;3)-[alpha-D-Man-(1-&gt;2)-alpha-D-Man-(1-&gt;6)]-alpha-D-Man-(1-&gt;6)]-beta-D-Man-(1-&gt;4)-beta-D-GlcNAc-(1-&gt;4)-alpha-D-GlcNAc-diphospho-di-trans,poly-cis-dolichol + a di-trans,poly-cis-dolichyl phosphate + H(+). The protein operates within protein modification; protein glycosylation. In terms of biological role, dol-P-Glc:Glc(2)Man(9)GlcNAc(2)-PP-Dol alpha-1,2-glucosyltransferase that operates in the biosynthetic pathway of dolichol-linked oligosaccharides, the glycan precursors employed in protein asparagine (N)-glycosylation. The assembly of dolichol-linked oligosaccharides begins on the cytosolic side of the endoplasmic reticulum membrane and finishes in its lumen. The sequential addition of sugars to dolichol pyrophosphate produces dolichol-linked oligosaccharides containing fourteen sugars, including two GlcNAcs, nine mannoses and three glucoses. Once assembled, the oligosaccharide is transferred from the lipid to nascent proteins by oligosaccharyltransferases. In the lumen of the endoplasmic reticulum, adds the third and last glucose residue from dolichyl phosphate glucose (Dol-P-Glc) onto the lipid-linked oligosaccharide intermediate Glc(2)Man(9)GlcNAc(2)-PP-Dol to produce Glc(3)Man(9)GlcNAc(2)-PP-Dol. This Rattus norvegicus (Rat) protein is Dol-P-Glc:Glc(2)Man(9)GlcNAc(2)-PP-Dol alpha-1,2-glucosyltransferase.